A 440-amino-acid polypeptide reads, in one-letter code: Histidinol dehydrogenase homolog 2 (440 aa).

H265 provides a ligand contact to Zn(2+). Active-site proton acceptor residues include E333 and H334. Residue H426 coordinates Zn(2+).

Belongs to the histidinol dehydrogenase family. Zn(2+) serves as cofactor.

In Mesorhizobium japonicum (strain LMG 29417 / CECT 9101 / MAFF 303099) (Mesorhizobium loti (strain MAFF 303099)), this protein is Histidinol dehydrogenase homolog 2.